Consider the following 357-residue polypeptide: Alanine racemase, catabolic (357 aa).

Lysine 33 functions as the Proton acceptor; specific for D-alanine in the catalytic mechanism. Lysine 33 is subject to N6-(pyridoxal phosphate)lysine. An N6-carboxylysine modification is found at lysine 122. Arginine 129 lines the substrate pocket. The active-site Proton acceptor; specific for L-alanine is the tyrosine 253. Position 301 (methionine 301) interacts with substrate.

The protein belongs to the alanine racemase family. Homodimer. Pyridoxal 5'-phosphate serves as cofactor.

It carries out the reaction L-alanine = D-alanine. Its function is as follows. Isomerizes L-alanine to D-alanine which is then oxidized to pyruvate by DadA. This Pseudomonas aeruginosa (strain ATCC 15692 / DSM 22644 / CIP 104116 / JCM 14847 / LMG 12228 / 1C / PRS 101 / PAO1) protein is Alanine racemase, catabolic.